Here is a 493-residue protein sequence, read N- to C-terminus: Guanosine-5'-triphosphate,3'-diphosphate pyrophosphatase (493 aa).

It belongs to the GppA/Ppx family. GppA subfamily.

The enzyme catalyses guanosine 3'-diphosphate 5'-triphosphate + H2O = guanosine 3',5'-bis(diphosphate) + phosphate + H(+). Its pathway is purine metabolism; ppGpp biosynthesis; ppGpp from GTP: step 2/2. Its function is as follows. Catalyzes the conversion of pppGpp to ppGpp. Guanosine pentaphosphate (pppGpp) is a cytoplasmic signaling molecule which together with ppGpp controls the 'stringent response', an adaptive process that allows bacteria to respond to amino acid starvation, resulting in the coordinated regulation of numerous cellular activities. The protein is Guanosine-5'-triphosphate,3'-diphosphate pyrophosphatase of Salmonella agona (strain SL483).